A 130-amino-acid polypeptide reads, in one-letter code: Small ribosomal subunit protein uS9 (130 aa).

It belongs to the universal ribosomal protein uS9 family.

The sequence is that of Small ribosomal subunit protein uS9 from Yersinia pseudotuberculosis serotype O:1b (strain IP 31758).